We begin with the raw amino-acid sequence, 132 residues long: Small ribosomal subunit protein uS11 (132 aa).

This sequence belongs to the universal ribosomal protein uS11 family. In terms of assembly, part of the 30S ribosomal subunit. Interacts with proteins S7 and S18. Binds to IF-3.

Functionally, located on the platform of the 30S subunit, it bridges several disparate RNA helices of the 16S rRNA. Forms part of the Shine-Dalgarno cleft in the 70S ribosome. The protein is Small ribosomal subunit protein uS11 of Legionella pneumophila (strain Corby).